A 416-amino-acid polypeptide reads, in one-letter code: Probable protein phosphatase 2C 49 (416 aa).

The 321-residue stretch at 91–411 (RYGVTSVFGR…DNVSVVVVDL (321 aa)) folds into the PPM-type phosphatase domain. 3 residues coordinate Mn(2+): Asp131, Gly132, and Asp319. Positions 343–360 (PPSPPGCSRPKAVLPPPA) are enriched in pro residues. Residues 343 to 368 (PPSPPGCSRPKAVLPPPAGASGGGGG) are disordered. Position 402 (Asp402) interacts with Mn(2+).

The protein belongs to the PP2C family. Requires Mg(2+) as cofactor. The cofactor is Mn(2+).

It carries out the reaction O-phospho-L-seryl-[protein] + H2O = L-seryl-[protein] + phosphate. The catalysed reaction is O-phospho-L-threonyl-[protein] + H2O = L-threonyl-[protein] + phosphate. The chain is Probable protein phosphatase 2C 49 from Oryza sativa subsp. japonica (Rice).